The primary structure comprises 956 residues: Translation initiation factor IF-2 (956 aa).

The interval 33-370 is disordered; the sequence is SHASSVEEAD…PVTERKFHEL (338 aa). Residues 46–60 show a composition bias toward polar residues; that stretch reads IASSFSAGVTKNVQA. Positions 63-73 are enriched in basic and acidic residues; sequence AKDKQVAEQKA. Low complexity predominate over residues 76 to 100; it reads AKATTPQPAASKAAEKPAAATQEAS. Composition is skewed to basic and acidic residues over residues 112–125, 134–143, and 179–192; these read FKAEREARAKEQVA, SNDRKSDYRQ, and NDGHRQAGNRDKNR. Low complexity predominate over residues 199-213; sequence RQQDTGRQGQTQAGA. Composition is skewed to basic and acidic residues over residues 234-258 and 266-276; these read ARQRESRFREQEEAKRLEQQARQEA and QTEDKKHREAS. Over residues 277–293 the composition is skewed to low complexity; the sequence is AKATESVASMAAASVAK. The segment covering 303 to 320 has biased composition (basic and acidic residues); the sequence is NRPDKGHDRDHGLEDGQK. A compositionally biased stretch (low complexity) spans 325–343; the sequence is SWNSQNQVRNQKNSNWNNN. A compositionally biased stretch (basic residues) spans 344–354; that stretch reads KKNKKGKHHKN. The 170-residue stretch at 457–626 folds into the tr-type G domain; that stretch reads ERAPVVTIMG…LLVAEVEELK (170 aa). Positions 466-473 are G1; the sequence is GHVDHGKT. 466–473 is a binding site for GTP; the sequence is GHVDHGKT. Residues 491–495 are G2; it reads GITQH. The segment at 512–515 is G3; that stretch reads DTPG. GTP contacts are provided by residues 512-516 and 566-569; these read DTPGH and NKID. Positions 566–569 are G4; that stretch reads NKID. Residues 602 to 604 are G5; the sequence is SAK.

The protein belongs to the TRAFAC class translation factor GTPase superfamily. Classic translation factor GTPase family. IF-2 subfamily.

The protein localises to the cytoplasm. One of the essential components for the initiation of protein synthesis. Protects formylmethionyl-tRNA from spontaneous hydrolysis and promotes its binding to the 30S ribosomal subunits. Also involved in the hydrolysis of GTP during the formation of the 70S ribosomal complex. This Streptococcus equi subsp. equi (strain 4047) protein is Translation initiation factor IF-2.